We begin with the raw amino-acid sequence, 499 residues long: Maturase K (499 aa).

The protein belongs to the intron maturase 2 family. MatK subfamily.

It is found in the plastid. The protein localises to the chloroplast. In terms of biological role, usually encoded in the trnK tRNA gene intron. Probably assists in splicing its own and other chloroplast group II introns. In Chamaecrista fasciculata (Showy partridge pea), this protein is Maturase K.